The primary structure comprises 286 residues: 33 kDa chaperonin (286 aa).

2 cysteine pairs are disulfide-bonded: Cys-225/Cys-227 and Cys-258/Cys-261.

The protein belongs to the HSP33 family. In terms of processing, under oxidizing conditions two disulfide bonds are formed involving the reactive cysteines. Under reducing conditions zinc is bound to the reactive cysteines and the protein is inactive.

It is found in the cytoplasm. In terms of biological role, redox regulated molecular chaperone. Protects both thermally unfolding and oxidatively damaged proteins from irreversible aggregation. Plays an important role in the bacterial defense system toward oxidative stress. The sequence is that of 33 kDa chaperonin from Shewanella woodyi (strain ATCC 51908 / MS32).